Reading from the N-terminus, the 138-residue chain is Large ribosomal subunit protein uL16 (138 aa).

This sequence belongs to the universal ribosomal protein uL16 family. Part of the 50S ribosomal subunit.

Binds 23S rRNA and is also seen to make contacts with the A and possibly P site tRNAs. The polypeptide is Large ribosomal subunit protein uL16 (Ureaplasma urealyticum serovar 10 (strain ATCC 33699 / Western)).